The chain runs to 97 residues: Protein SENESCENCE-ASSOCIATED GENE 21, mitochondrial (97 aa).

Residues 1–46 constitute a mitochondrion transit peptide; the sequence is MARSISNVKIVSAFVSRELSNAIFRRGYAATAAQGSVSSGGRSGAV.

The protein belongs to the LEA type 3 family. In terms of tissue distribution, expressed in roots, stems leaves and flowers, but not in seeds. In short days, observed in cotyledons and roots but absent from rosette leaves.

Its subcellular location is the mitochondrion. Mediates tolerance to oxidative stresses (e.g. hydrogen peroxide H(2)O(2), diamide, menadione and tert-butyl hydroperoxide) by minimizing the negative effects of oxidation and monitoring photosynthesis during stress. Promotes root development. Prevents premature aging (e.g. senescence and flowering). Involved in resistance against compatible pathogens such as Botrytis cinerea and Pseudomonas syringae pv. tomato. The protein is Protein SENESCENCE-ASSOCIATED GENE 21, mitochondrial of Arabidopsis thaliana (Mouse-ear cress).